The following is a 92-amino-acid chain: UPF0223 protein SPCG_1392 (92 aa).

The protein belongs to the UPF0223 family.

The sequence is that of UPF0223 protein SPCG_1392 from Streptococcus pneumoniae (strain CGSP14).